A 256-amino-acid polypeptide reads, in one-letter code: Undecaprenyl-diphosphatase (256 aa).

The next 8 helical transmembrane spans lie at 1–21 (MTIL…FLPI), 39–59 (NAIN…AVIF), 70–90 (IDLW…GFIF), 97–117 (LFSL…FLIV), 134–154 (AISL…LIPG), 176–196 (AEFS…YDLL), 205–225 (ANLI…YLSI), and 235–255 (FTFF…LLFF).

This sequence belongs to the UppP family.

Its subcellular location is the cell inner membrane. It carries out the reaction di-trans,octa-cis-undecaprenyl diphosphate + H2O = di-trans,octa-cis-undecaprenyl phosphate + phosphate + H(+). Functionally, catalyzes the dephosphorylation of undecaprenyl diphosphate (UPP). Confers resistance to bacitracin. The sequence is that of Undecaprenyl-diphosphatase from Sulfurimonas denitrificans (strain ATCC 33889 / DSM 1251) (Thiomicrospira denitrificans (strain ATCC 33889 / DSM 1251)).